The chain runs to 370 residues: uncharacterized protein (370 aa).

A divalent metal cation-binding residues include Asp-152, His-154, Asp-184, Asn-215, His-306, and His-308.

It belongs to the metallophosphoesterase superfamily. A divalent metal cation is required as a cofactor.

This is an uncharacterized protein from Helicobacter pylori (strain ATCC 700392 / 26695) (Campylobacter pylori).